A 475-amino-acid chain; its full sequence is Tryptophan--tRNA ligase, cytoplasmic (475 aa).

The WHEP-TRS domain occupies 12 to 68 (SPQELFSSIAAQGELVKSLKARKAPKEEIDSAVKMLLSLKTSYKEAMGEDYKADCPP). A disordered region spans residues 61–87 (DYKADCPPGNSTPDSHGDPEAVDDKED). Lysine 158 bears the N6-succinyllysine mark. The 'HIGH' region motif lies at 168–177 (PSSEAMHVGH). The 'KMSKS' region signature appears at 353–357 (KMSAS). A Phosphoserine modification is found at serine 355.

It belongs to the class-I aminoacyl-tRNA synthetase family. In terms of assembly, homodimer. Interacts with oxidized form of GAPDH. Post-translationally, proteolytic cleavage generates 2 forms; T1-TrpRS and T2-TrpRS.

It is found in the cytoplasm. It carries out the reaction tRNA(Trp) + L-tryptophan + ATP = L-tryptophyl-tRNA(Trp) + AMP + diphosphate + H(+). Functionally, catalyzes the attachment of tryptophan to tRNA(Trp) in a two-step reaction: tryptophan is first activated by ATP to form Trp-AMP and then transferred to the acceptor end of the tRNA(Trp). Could also possess an angiostatic activity. This Oryctolagus cuniculus (Rabbit) protein is Tryptophan--tRNA ligase, cytoplasmic (WARS1).